The chain runs to 278 residues: Alcohol dehydrogenase-related 31 kDa protein (278 aa).

11–34 is an NAD(+) binding site; it reads YVADCGGIALETSKVLMTKNIAKL. Ser-139 contributes to the substrate binding site. Residue Tyr-152 is the Proton acceptor of the active site.

The protein belongs to the short-chain dehydrogenases/reductases (SDR) family.

The protein is Alcohol dehydrogenase-related 31 kDa protein (Adhr) of Drosophila pseudoobscura pseudoobscura (Fruit fly).